Consider the following 425-residue polypeptide: Sucrose-phosphatase 2 (425 aa).

The protein belongs to the sucrose phosphatase family. As to quaternary structure, homodimer. It depends on Mg(2+) as a cofactor.

It catalyses the reaction sucrose 6(F)-phosphate + H2O = sucrose + phosphate. The protein operates within glycan biosynthesis; sucrose biosynthesis; sucrose from D-fructose 6-phosphate and UDP-alpha-D-glucose: step 2/2. Inhibited by EDTA. Functionally, catalyzes the final step of sucrose synthesis. In Nicotiana tabacum (Common tobacco), this protein is Sucrose-phosphatase 2 (SPP2).